Here is a 227-residue protein sequence, read N- to C-terminus: Agamous-like MADS-box protein AGL17 (227 aa).

The MADS-box domain occupies 3–57; that stretch reads RGKIVIQKIDDSTSRQVTFSKRRKGLIKKAKELAILCDAEVCLIIFSNTDKLYDF. One can recognise a K-box domain in the interval 86 to 176; that stretch reads VKFWQREAET…SRKVQRIHQE (91 aa).

As to expression, preferentially expressed in roots.

It localises to the nucleus. Its function is as follows. Probable transcription factor. The protein is Agamous-like MADS-box protein AGL17 (AGL17) of Arabidopsis thaliana (Mouse-ear cress).